We begin with the raw amino-acid sequence, 366 residues long: Phospho-N-acetylmuramoyl-pentapeptide-transferase (366 aa).

Transmembrane regions (helical) follow at residues 27-47 (AALFTSALIVFLFGPAMIASL), 71-91 (TPTMGGLMILAGIVVSSLLWA), 93-113 (LSSIYVVSTLLVTLGFGAIGF), 138-158 (FVIASIAVFFMMQAALSAGAA), 174-194 (LMLNLGYFFVLFGGFVIVGAG), 205-225 (GLAIVPVMIASAAFGLIAYLA), 245-265 (LAVILGAVIGAGLGFLWFNAP), 268-288 (AIFMGDTGSLALGGLIGTVAV), 297-317 (VIIGGLFVMETLSVIIQVFWF), and 343-363 (QVVIRFWIIAVILAMVGLSTL).

This sequence belongs to the glycosyltransferase 4 family. MraY subfamily. Requires Mg(2+) as cofactor.

The protein resides in the cell inner membrane. It catalyses the reaction UDP-N-acetyl-alpha-D-muramoyl-L-alanyl-gamma-D-glutamyl-meso-2,6-diaminopimeloyl-D-alanyl-D-alanine + di-trans,octa-cis-undecaprenyl phosphate = di-trans,octa-cis-undecaprenyl diphospho-N-acetyl-alpha-D-muramoyl-L-alanyl-D-glutamyl-meso-2,6-diaminopimeloyl-D-alanyl-D-alanine + UMP. The protein operates within cell wall biogenesis; peptidoglycan biosynthesis. Its function is as follows. Catalyzes the initial step of the lipid cycle reactions in the biosynthesis of the cell wall peptidoglycan: transfers peptidoglycan precursor phospho-MurNAc-pentapeptide from UDP-MurNAc-pentapeptide onto the lipid carrier undecaprenyl phosphate, yielding undecaprenyl-pyrophosphoryl-MurNAc-pentapeptide, known as lipid I. This chain is Phospho-N-acetylmuramoyl-pentapeptide-transferase, found in Sinorhizobium medicae (strain WSM419) (Ensifer medicae).